Here is a 574-residue protein sequence, read N- to C-terminus: E3 ubiquitin-protein ligase TRIM23 (574 aa).

Residues 31–76 form an RING-type; degenerate zinc finger; the sequence is CGVCEDVFSLQGDKVPRLLLCGHTVCHDCLTRLPLHGRAIRCPFDR. A B box-type; degenerate zinc finger spans residues 122 to 168; sequence ESIIRCDEDEAHVASVYCTVCATHLCSDCSQVTHSTKTLAKHRRVPL. Residues 352-379 are a coiled coil; the sequence is RVVLAKQEITRLLETLQKQQQQFTEVAD. An ARF-like region spans residues 390–574; the sequence is TFTKDNRVHI…LVAAGVLDVA (185 aa). GTP is bound by residues 411 to 418, 454 to 458, and 513 to 516; these read GLDGAGKT, DVGGK, and NKQD.

It in the C-terminal section; belongs to the small GTPase superfamily. Arf family. In terms of assembly, homodimer. Interacts with PSCD1. Interacts with UBE2D2. Interacts with TBK1 (via N-terminal kinase domain) and p62/SQSTM1.

The protein localises to the cytoplasm. It is found in the endomembrane system. Its subcellular location is the golgi apparatus membrane. It localises to the lysosome membrane. It carries out the reaction S-ubiquitinyl-[E2 ubiquitin-conjugating enzyme]-L-cysteine + [acceptor protein]-L-lysine = [E2 ubiquitin-conjugating enzyme]-L-cysteine + N(6)-ubiquitinyl-[acceptor protein]-L-lysine.. Its pathway is protein modification; protein ubiquitination. Its function is as follows. Acts as an E3 ubiquitin-protein ligase. Plays an essential role in autophagy activation during viral infection. Mechanistically, activates TANK-binding kinase 1/TBK1 by facilitating its dimerization and ability to phosphorylate the selective autophagy receptor SQSTM1. In order to achieve this function, TRIM23 mediates 'Lys-27'-linked auto-ubiquitination of its ADP-ribosylation factor (ARF) domain to induce its GTPase activity and its recruitment to autophagosomes. The sequence is that of E3 ubiquitin-protein ligase TRIM23 (Trim23) from Mus musculus (Mouse).